A 352-amino-acid polypeptide reads, in one-letter code: Alanine racemase (352 aa).

The active-site Proton acceptor; specific for D-alanine is the lysine 33. Position 33 is an N6-(pyridoxal phosphate)lysine (lysine 33). A substrate-binding site is contributed by arginine 129. Tyrosine 250 (proton acceptor; specific for L-alanine) is an active-site residue. Methionine 298 is a substrate binding site.

Belongs to the alanine racemase family. Requires pyridoxal 5'-phosphate as cofactor.

The enzyme catalyses L-alanine = D-alanine. The protein operates within amino-acid biosynthesis; D-alanine biosynthesis; D-alanine from L-alanine: step 1/1. Its function is as follows. Catalyzes the interconversion of L-alanine and D-alanine. May also act on other amino acids. The chain is Alanine racemase (alr) from Neisseria meningitidis serogroup C / serotype 2a (strain ATCC 700532 / DSM 15464 / FAM18).